A 775-amino-acid polypeptide reads, in one-letter code: Coiled-coil domain-containing protein 33 (775 aa).

Disordered stretches follow at residues 1–23 (MGRQ…LDPY) and 68–87 (EANN…PTRA). The span at 7-18 (KVPEEPQDRLDT) shows a compositional bias: basic and acidic residues. In terms of domain architecture, C2 spans 12 to 141 (PQDRLDTSLD…RAFHPYHFEL (130 aa)). Positions 71 to 84 (NHSPQARTSVTSEP) are enriched in polar residues. 2 coiled-coil regions span residues 414 to 561 (VEMN…ERKE) and 672 to 715 (DKFS…LQEQ). Positions 735-775 (RSQGSTTPRQNLKDEGYPGNIERPLQTHLTPGTRDIRHHLR) are disordered.

This Rattus norvegicus (Rat) protein is Coiled-coil domain-containing protein 33 (Ccdc33).